A 386-amino-acid chain; its full sequence is Galactokinase (386 aa).

35–38 (EHTD) provides a ligand contact to substrate. ATP is bound by residues Ser-69 and 125–131 (GAGLSSS). Residues Ser-131 and Glu-163 each coordinate Mg(2+). The Proton acceptor role is filled by Asp-175. Tyr-224 serves as a coordination point for substrate.

The protein belongs to the GHMP kinase family. GalK subfamily.

Its subcellular location is the cytoplasm. The catalysed reaction is alpha-D-galactose + ATP = alpha-D-galactose 1-phosphate + ADP + H(+). The protein operates within carbohydrate metabolism; galactose metabolism. In terms of biological role, catalyzes the transfer of the gamma-phosphate of ATP to D-galactose to form alpha-D-galactose-1-phosphate (Gal-1-P). The protein is Galactokinase of Vibrio parahaemolyticus serotype O3:K6 (strain RIMD 2210633).